The chain runs to 66 residues: Small ribosomal subunit protein bS21B (66 aa).

Positions 38-66 (YVKPTQKRKIAKKAAISKAKKEARRSYSY) are disordered.

It belongs to the bacterial ribosomal protein bS21 family.

The sequence is that of Small ribosomal subunit protein bS21B from Francisella tularensis subsp. tularensis (strain SCHU S4 / Schu 4).